The sequence spans 395 residues: Dihydroorotate dehydrogenase (quinone), mitochondrial (395 aa).

Residues 1 to 10 constitute a mitochondrion; not cleaved transit peptide; the sequence is MAWRQLKKRA. Topologically, residues 1-10 are mitochondrial matrix; it reads MAWRQLKKRA. Residues 11 to 30 form a helical membrane-spanning segment; it reads QDAMVILGGGGLLFASYLTA. Topologically, residues 31–395 are mitochondrial intermembrane; sequence TGDEHFYAEL…TDAIGADHRR (365 aa). FMN contacts are provided by residues 95 to 99 and serine 119; that span reads AGFDK. Lysine 99 serves as a coordination point for substrate. Position 144-148 (144-148) interacts with substrate; it reads NRYGF. FMN is bound by residues asparagine 180 and asparagine 211. 211-216 provides a ligand contact to substrate; sequence NVSSPN. Serine 214 serves as the catalytic Nucleophile. Residues lysine 254 and threonine 282 each contribute to the FMN site. 283–284 serves as a coordination point for substrate; it reads NS. Residues glycine 305, glycine 334, and 355–356 contribute to the FMN site; that span reads YT.

This sequence belongs to the dihydroorotate dehydrogenase family. Type 2 subfamily. As to quaternary structure, monomer. FMN is required as a cofactor. Post-translationally, the uncleaved transit peptide is required for mitochondrial targeting and proper membrane integration.

It is found in the mitochondrion inner membrane. It carries out the reaction (S)-dihydroorotate + a quinone = orotate + a quinol. It functions in the pathway pyrimidine metabolism; UMP biosynthesis via de novo pathway; orotate from (S)-dihydroorotate (quinone route): step 1/1. In terms of biological role, catalyzes the conversion of dihydroorotate to orotate with quinone as electron acceptor. Required for UMP biosynthesis via de novo pathway. The protein is Dihydroorotate dehydrogenase (quinone), mitochondrial (DHODH) of Bos taurus (Bovine).